Here is a 257-residue protein sequence, read N- to C-terminus: Expansin-A10 (257 aa).

The first 18 residues, 1 to 18 (MAPCLLLVLFLLPALATG), serve as a signal peptide directing secretion. The Expansin-like EG45 domain occupies 50-163 (GGACGFGDLG…RRVNCLRDGG (114 aa)). The 80-residue stretch at 173-252 (FFLTVLISNV…EWDFGKTYTG (80 aa)) folds into the Expansin-like CBD domain.

It belongs to the expansin family. Expansin A subfamily. As to expression, expressed in panicles and flowers.

Its subcellular location is the secreted. The protein localises to the cell wall. It localises to the membrane. Functionally, may cause loosening and extension of plant cell walls by disrupting non-covalent bonding between cellulose microfibrils and matrix glucans. No enzymatic activity has been found. May be required for rapid internodal elongation in deepwater rice during submergence. The sequence is that of Expansin-A10 (EXPA10) from Oryza sativa subsp. japonica (Rice).